The following is a 186-amino-acid chain: Elongation factor P (186 aa).

It belongs to the elongation factor P family.

The protein localises to the cytoplasm. It participates in protein biosynthesis; polypeptide chain elongation. Involved in peptide bond synthesis. Stimulates efficient translation and peptide-bond synthesis on native or reconstituted 70S ribosomes in vitro. Probably functions indirectly by altering the affinity of the ribosome for aminoacyl-tRNA, thus increasing their reactivity as acceptors for peptidyl transferase. This Shewanella piezotolerans (strain WP3 / JCM 13877) protein is Elongation factor P.